We begin with the raw amino-acid sequence, 712 residues long: Polyribonucleotide nucleotidyltransferase (712 aa).

Positions 484 and 490 each coordinate Mg(2+). The region spanning 551–610 (PKVFTIQIHPDKIRDIIGPGGKVIRAIQAETGTRVDVDDSGLVKVSAVNLEEGEAALQMI) is the KH domain. In terms of domain architecture, S1 motif spans 620-688 (GAVYEGTVVK…KDGKIRLSRK (69 aa)). The segment at 689–712 (ALLEEENGKSGPENGAPQRDKNRH) is disordered.

It belongs to the polyribonucleotide nucleotidyltransferase family. Mg(2+) is required as a cofactor.

Its subcellular location is the cytoplasm. It carries out the reaction RNA(n+1) + phosphate = RNA(n) + a ribonucleoside 5'-diphosphate. Functionally, involved in mRNA degradation. Catalyzes the phosphorolysis of single-stranded polyribonucleotides processively in the 3'- to 5'-direction. In Desulfatibacillum aliphaticivorans, this protein is Polyribonucleotide nucleotidyltransferase.